The primary structure comprises 439 residues: tRNA modification GTPase MnmE (439 aa).

(6S)-5-formyl-5,6,7,8-tetrahydrofolate-binding residues include arginine 20, glutamate 78, and lysine 116. The 154-residue stretch at 211-364 (GIYVAILGEP…LLSAIQKKVE (154 aa)) folds into the TrmE-type G domain. GTP is bound by residues 221–226 (NSGKST), 240–246 (SEYAGTT), and 265–268 (DTAG). Mg(2+) contacts are provided by serine 225 and threonine 246. Residue lysine 439 coordinates (6S)-5-formyl-5,6,7,8-tetrahydrofolate.

It belongs to the TRAFAC class TrmE-Era-EngA-EngB-Septin-like GTPase superfamily. TrmE GTPase family. As to quaternary structure, homodimer. Heterotetramer of two MnmE and two MnmG subunits. It depends on K(+) as a cofactor.

It is found in the cytoplasm. Functionally, exhibits a very high intrinsic GTPase hydrolysis rate. Involved in the addition of a carboxymethylaminomethyl (cmnm) group at the wobble position (U34) of certain tRNAs, forming tRNA-cmnm(5)s(2)U34. The protein is tRNA modification GTPase MnmE of Ehrlichia ruminantium (strain Welgevonden).